Here is a 185-residue protein sequence, read N- to C-terminus: ATP synthase subunit delta (185 aa).

The protein belongs to the ATPase delta chain family. In terms of assembly, F-type ATPases have 2 components, F(1) - the catalytic core - and F(0) - the membrane proton channel. F(1) has five subunits: alpha(3), beta(3), gamma(1), delta(1), epsilon(1). F(0) has three main subunits: a(1), b(2) and c(10-14). The alpha and beta chains form an alternating ring which encloses part of the gamma chain. F(1) is attached to F(0) by a central stalk formed by the gamma and epsilon chains, while a peripheral stalk is formed by the delta and b chains.

The protein localises to the cell inner membrane. F(1)F(0) ATP synthase produces ATP from ADP in the presence of a proton or sodium gradient. F-type ATPases consist of two structural domains, F(1) containing the extramembraneous catalytic core and F(0) containing the membrane proton channel, linked together by a central stalk and a peripheral stalk. During catalysis, ATP synthesis in the catalytic domain of F(1) is coupled via a rotary mechanism of the central stalk subunits to proton translocation. Functionally, this protein is part of the stalk that links CF(0) to CF(1). It either transmits conformational changes from CF(0) to CF(1) or is implicated in proton conduction. In Phocaeicola vulgatus (strain ATCC 8482 / DSM 1447 / JCM 5826 / CCUG 4940 / NBRC 14291 / NCTC 11154) (Bacteroides vulgatus), this protein is ATP synthase subunit delta.